The following is a 436-amino-acid chain: UPF0597 protein YhaM (436 aa).

Belongs to the UPF0597 family.

In Shigella sonnei (strain Ss046), this protein is UPF0597 protein YhaM.